We begin with the raw amino-acid sequence, 299 residues long: 11-beta-hydroxysteroid dehydrogenase-like 4A (299 aa).

Residues 10-30 form a helical; Signal-anchor for type II membrane protein membrane-spanning segment; it reads ILLPIVTVSFLLVFMPFSIFF. Residues 54–80 and Asp105 each bind NADP(+); that span reads GSSS…VARR. Ser184 provides a ligand contact to substrate. Residue Tyr197 is the Proton acceptor of the active site. NADP(+)-binding positions include 197–201 and Lys201; that span reads YAASK.

It belongs to the short-chain dehydrogenases/reductases (SDR) family.

It is found in the membrane. This chain is 11-beta-hydroxysteroid dehydrogenase-like 4A (HSD4), found in Arabidopsis thaliana (Mouse-ear cress).